The following is a 164-amino-acid chain: S-ribosylhomocysteine lyase (164 aa).

The Fe cation site is built by H54, H58, and C128.

The protein belongs to the LuxS family. As to quaternary structure, homodimer. It depends on Fe cation as a cofactor.

It carries out the reaction S-(5-deoxy-D-ribos-5-yl)-L-homocysteine = (S)-4,5-dihydroxypentane-2,3-dione + L-homocysteine. In terms of biological role, involved in the synthesis of autoinducer 2 (AI-2) which is secreted by bacteria and is used to communicate both the cell density and the metabolic potential of the environment. The regulation of gene expression in response to changes in cell density is called quorum sensing. Catalyzes the transformation of S-ribosylhomocysteine (RHC) to homocysteine (HC) and 4,5-dihydroxy-2,3-pentadione (DPD). The protein is S-ribosylhomocysteine lyase of Campylobacter jejuni subsp. jejuni serotype O:2 (strain ATCC 700819 / NCTC 11168).